The chain runs to 171 residues: S-ribosylhomocysteine lyase (171 aa).

Residues His-54, His-58, and Cys-128 each coordinate Fe cation.

Belongs to the LuxS family. As to quaternary structure, homodimer. Fe cation is required as a cofactor.

The catalysed reaction is S-(5-deoxy-D-ribos-5-yl)-L-homocysteine = (S)-4,5-dihydroxypentane-2,3-dione + L-homocysteine. Its function is as follows. Involved in the synthesis of autoinducer 2 (AI-2) which is secreted by bacteria and is used to communicate both the cell density and the metabolic potential of the environment. The regulation of gene expression in response to changes in cell density is called quorum sensing. Catalyzes the transformation of S-ribosylhomocysteine (RHC) to homocysteine (HC) and 4,5-dihydroxy-2,3-pentadione (DPD). The polypeptide is S-ribosylhomocysteine lyase (Pectobacterium carotovorum subsp. carotovorum (strain PC1)).